The chain runs to 223 residues: Class E basic helix-loop-helix protein 23 (223 aa).

The interval 32 to 93 (PETTRGFGAS…GVAVDARRRP (62 aa)) is disordered. The 55-residue stretch at 98 to 152 (SLRLSINARERRRMHDLNDALDGLRAVIPYAHSPSVRKLSKIATLLLAKNYILMQ) folds into the bHLH domain.

Expressed in brain and retina.

The protein resides in the nucleus. In terms of biological role, may function as transcriptional repressor. May modulate the expression of genes required for the differentiation and/or maintenance of pancreatic and neuronal cell types. May be important for rod bipolar cell maturation. This chain is Class E basic helix-loop-helix protein 23 (Bhlhe23), found in Mus musculus (Mouse).